The primary structure comprises 205 residues: Guanylate kinase (205 aa).

Residues 7-185 (GNIFIISAAS…AEEDLRHIVN (179 aa)) form the Guanylate kinase-like domain. 14 to 21 (AASGTGKT) is an ATP binding site.

This sequence belongs to the guanylate kinase family.

It localises to the cytoplasm. The catalysed reaction is GMP + ATP = GDP + ADP. Essential for recycling GMP and indirectly, cGMP. The protein is Guanylate kinase (gmk) of Neisseria meningitidis serogroup A / serotype 4A (strain DSM 15465 / Z2491).